A 445-amino-acid chain; its full sequence is tRNA(Ile)-lysidine synthase (445 aa).

19–24 lines the ATP pocket; the sequence is SGGIDS.

The protein belongs to the tRNA(Ile)-lysidine synthase family.

The protein localises to the cytoplasm. It catalyses the reaction cytidine(34) in tRNA(Ile2) + L-lysine + ATP = lysidine(34) in tRNA(Ile2) + AMP + diphosphate + H(+). In terms of biological role, ligates lysine onto the cytidine present at position 34 of the AUA codon-specific tRNA(Ile) that contains the anticodon CAU, in an ATP-dependent manner. Cytidine is converted to lysidine, thus changing the amino acid specificity of the tRNA from methionine to isoleucine. The polypeptide is tRNA(Ile)-lysidine synthase (Buchnera aphidicola subsp. Schizaphis graminum (strain Sg)).